Reading from the N-terminus, the 365-residue chain is Pre-mRNA-splicing factor srp2 (365 aa).

RRM domains follow at residues 6–69 (LFVG…RIVV) and 100–166 (LIVE…AVTL). Positions 166–365 (LREDPDAANE…SAEGQVAAEW (200 aa)) are disordered. Over residues 184–194 (FRSRSPPARRR) the composition is skewed to basic residues. Phosphoserine occurs at positions 186, 188, 276, 294, 296, 298, and 308. Over residues 195–307 (YRDDYRRGGD…SPRRDREENR (113 aa)) the composition is skewed to basic and acidic residues. Positions 316-332 (SYSAAPEASMESSAPTE) are enriched in low complexity. A compositionally biased stretch (polar residues) spans 341-353 (EEQQPLQNHSDVG).

It belongs to the splicing factor SR family. In terms of processing, extensively phosphorylated on serine residues in the RS domain.

Its subcellular location is the nucleus. Has a role in pre-mRNA splicing where it is involved in spliceosome assembly. This is Pre-mRNA-splicing factor srp2 (srp2) from Schizosaccharomyces pombe (strain 972 / ATCC 24843) (Fission yeast).